A 177-amino-acid chain; its full sequence is tRNA (cytidine(56)-2'-O)-methyltransferase (177 aa).

Residues Leu-84 and 109–113 each bind S-adenosyl-L-methionine; that span reads GAEKV.

This sequence belongs to the aTrm56 family. In terms of assembly, homodimer.

It localises to the cytoplasm. The catalysed reaction is cytidine(56) in tRNA + S-adenosyl-L-methionine = 2'-O-methylcytidine(56) in tRNA + S-adenosyl-L-homocysteine + H(+). Functionally, specifically catalyzes the AdoMet-dependent 2'-O-ribose methylation of cytidine at position 56 in tRNAs. This chain is tRNA (cytidine(56)-2'-O)-methyltransferase, found in Methanosarcina barkeri (strain Fusaro / DSM 804).